Consider the following 125-residue polypeptide: Phosphoribosyl-AMP cyclohydrolase (125 aa).

Aspartate 80 serves as a coordination point for Mg(2+). Residue cysteine 81 coordinates Zn(2+). Mg(2+) contacts are provided by aspartate 82 and aspartate 84. 2 residues coordinate Zn(2+): cysteine 97 and cysteine 104.

It belongs to the PRA-CH family. As to quaternary structure, homodimer. Requires Mg(2+) as cofactor. Zn(2+) is required as a cofactor.

It localises to the cytoplasm. The enzyme catalyses 1-(5-phospho-beta-D-ribosyl)-5'-AMP + H2O = 1-(5-phospho-beta-D-ribosyl)-5-[(5-phospho-beta-D-ribosylamino)methylideneamino]imidazole-4-carboxamide. It participates in amino-acid biosynthesis; L-histidine biosynthesis; L-histidine from 5-phospho-alpha-D-ribose 1-diphosphate: step 3/9. Catalyzes the hydrolysis of the adenine ring of phosphoribosyl-AMP. The protein is Phosphoribosyl-AMP cyclohydrolase of Leifsonia xyli subsp. xyli (strain CTCB07).